Here is a 291-residue protein sequence, read N- to C-terminus: ATP synthase gamma chain 2 (291 aa).

A disordered region spans residues 187 to 208; the sequence is LLPHPDKDESQDSKPNDATSRW. The span at 190-201 shows a compositional bias: basic and acidic residues; that stretch reads HPDKDESQDSKP.

Belongs to the ATPase gamma chain family. In terms of assembly, F-type ATPases have 2 components, CF(1) - the catalytic core - and CF(0) - the membrane proton channel. CF(1) has five subunits: alpha(3), beta(3), gamma(1), delta(1), epsilon(1). CF(0) has three main subunits: a, b and c.

The protein localises to the cell inner membrane. Functionally, produces ATP from ADP in the presence of a proton gradient across the membrane. The gamma chain is believed to be important in regulating ATPase activity and the flow of protons through the CF(0) complex. The polypeptide is ATP synthase gamma chain 2 (Photobacterium profundum (strain SS9)).